Here is a 935-residue protein sequence, read N- to C-terminus: Coatomer subunit gamma (935 aa).

HEAT repeat units lie at residues 258–296 (PQLF…RNSR), 337–372 (PEKI…TGTS), 373–410 (KNIS…NFPQ), 412–449 (WKSI…FVPQ), and 524–562 (PTLY…ARNK). The interval 630-656 (KSETTLDTTPEAESVPEKRADANSFAG) is disordered. Threonine 638 is modified (phosphothreonine). Serine 643 carries the post-translational modification Phosphoserine. A Glycyl lysine isopeptide (Lys-Gly) (interchain with G-Cter in ubiquitin) cross-link involves residue lysine 647. Phosphoserine is present on serine 653.

The protein belongs to the COPG family. In terms of assembly, oligomeric complex that consists of at least the alpha, beta, beta', gamma, delta, epsilon and zeta subunits. Interacts (via C-terminus) with GEA1 (via N-terminal region) and KEI1 (via C-terminal region).

It is found in the cytoplasm. Its subcellular location is the golgi apparatus membrane. It localises to the cytoplasmic vesicle. The protein localises to the COPI-coated vesicle membrane. The protein resides in the endosome. Functionally, the coatomer is a cytosolic protein complex that binds to dilysine motifs and reversibly associates with Golgi non-clathrin-coated vesicles, which further mediate biosynthetic protein transport from the ER, via the Golgi up to the trans Golgi network. Coatomer complex is required for budding from Golgi membranes, and is essential for the retrograde Golgi-to-ER transport of dilysine-tagged proteins. This is Coatomer subunit gamma (SEC21) from Saccharomyces cerevisiae (strain ATCC 204508 / S288c) (Baker's yeast).